A 312-amino-acid chain; its full sequence is Ribosomal protein L11 methyltransferase (312 aa).

S-adenosyl-L-methionine-binding residues include T160, G181, D203, and N246.

It belongs to the methyltransferase superfamily. PrmA family.

Its subcellular location is the cytoplasm. The catalysed reaction is L-lysyl-[protein] + 3 S-adenosyl-L-methionine = N(6),N(6),N(6)-trimethyl-L-lysyl-[protein] + 3 S-adenosyl-L-homocysteine + 3 H(+). Functionally, methylates ribosomal protein L11. This is Ribosomal protein L11 methyltransferase from Staphylococcus carnosus (strain TM300).